Reading from the N-terminus, the 241-residue chain is MPKYEIMTILDPKAEMAIIDNLLKTVFGDNSTEKLRKLETTNLAYPIRKSKIAQYFLVELNAPTNLIEEFVRRANITREIWRYLIVNLDSEKGLNKKPKIRERNRKYTPRRDRFDKPNFRGNPKSRFDQQDQQATKNQQNFQQNQQNQTSQYRENSRQNQDDFQQVSSNQQNFRQNQQNQSGYHRENNRQNQENIHQNNKNHQNQTSQTQRSRRQYQPIKNPKFNQKEKENYNNKKPQSSN.

The segment covering 97-108 (KPKIRERNRKYT) has biased composition (basic residues). 2 disordered regions span residues 97–187 (KPKI…HREN) and 199–241 (NKNH…QSSN). Basic and acidic residues predominate over residues 109–118 (PRRDRFDKPN). 3 stretches are compositionally biased toward low complexity: residues 130 to 151 (QDQQ…QTSQ), 161 to 180 (DDFQ…QQNQ), and 199 to 210 (NKNHQNQTSQTQ).

It belongs to the bacterial ribosomal protein bS6 family.

Binds together with bS18 to 16S ribosomal RNA. This is Small ribosomal subunit protein bS6 from Mesomycoplasma hyopneumoniae (strain 7448) (Mycoplasma hyopneumoniae).